Consider the following 115-residue polypeptide: Immunoglobulin kappa chain variable 12-41 (115 aa).

Positions 1-20 are cleaved as a signal peptide; sequence MSVLTQVLALLLLWLTGARC. The framework-1 stretch occupies residues 21 to 43; it reads DIQMTQSPASLSASVGETVTITC. An intrachain disulfide couples Cys43 to Cys108. The tract at residues 44–54 is complementarity-determining-1; it reads RASGNIHNYLA. A framework-2 region spans residues 55-69; that stretch reads WYQQKQGKSPQLLVY. Positions 70–76 are complementarity-determining-2; the sequence is NAKTLAD. The interval 77-108 is framework-3; it reads GVPSRFSGSGSGTQYSLKINSLQPEDFGSYYC. A complementarity-determining-3 region spans residues 109–115; the sequence is QHFWSTP.

This Mus musculus (Mouse) protein is Immunoglobulin kappa chain variable 12-41.